Here is a 45-residue protein sequence, read N- to C-terminus: Large ribosomal subunit protein bL34 (45 aa).

It belongs to the bacterial ribosomal protein bL34 family.

The sequence is that of Large ribosomal subunit protein bL34 from Beutenbergia cavernae (strain ATCC BAA-8 / DSM 12333 / CCUG 43141 / JCM 11478 / NBRC 16432 / NCIMB 13614 / HKI 0122).